The following is a 350-amino-acid chain: Putative D-xylulose reductase (350 aa).

3 residues coordinate Zn(2+): cysteine 43, histidine 68, and glutamate 154.

Belongs to the zinc-containing alcohol dehydrogenase family. It depends on Zn(2+) as a cofactor.

The catalysed reaction is xylitol + NAD(+) = D-xylulose + NADH + H(+). This chain is Putative D-xylulose reductase, found in Agrobacterium fabrum (strain C58 / ATCC 33970) (Agrobacterium tumefaciens (strain C58)).